Reading from the N-terminus, the 415-residue chain is D-serine dehydratase (415 aa).

At lysine 68 the chain carries N6-(pyridoxal phosphate)lysine. Residues tyrosine 204, tyrosine 211, threonine 253, glycine 279, and asparagine 280 each coordinate pyridoxal 5'-phosphate. Positions 385 and 387 each coordinate Zn(2+).

The protein belongs to the DSD1 family. In terms of assembly, homodimer. It depends on pyridoxal 5'-phosphate as a cofactor. Requires Zn(2+) as cofactor.

It localises to the cytoplasm. The protein localises to the nucleus. It carries out the reaction D-serine = pyruvate + NH4(+). Functionally, catalyzes the conversion of D-serine to pyruvate and ammonia. May play a role in D-serine detoxification. The polypeptide is D-serine dehydratase (Schizosaccharomyces pombe (strain 972 / ATCC 24843) (Fission yeast)).